Here is a 557-residue protein sequence, read N- to C-terminus: Potassium-transporting ATPase potassium-binding subunit (557 aa).

12 consecutive transmembrane segments (helical) span residues 5–25 (GFLLIATFLLVLMVLARPLGS), 63–83 (LCAILGLNMLGLAVLFFMLLG), 132–152 (GLTVQNFLSAASGIAVIFAFI), 170–190 (LLRITLWVLVPVALLIALFLI), 253–273 (FVQMLAIFLIPTALCFAFGEV), 283–303 (LLWAMSVIFVICVGVVMWAEV), 329–349 (VLVSSLFAVVTTAASCGAVIA), 356–376 (ALGGMVPMWLMQIGEVVFGGV), 379–399 (GLYGMMLFVLLAVFIAGLMIG), 416–436 (LTALAILVTPTLVLMGAALAM), 484–504 (LLAFCMFVGRFGVIIPVMAIA), and 526–546 (LFVGLLIGTVLLVGALTFIPA).

This sequence belongs to the KdpA family. As to quaternary structure, the system is composed of three essential subunits: KdpA, KdpB and KdpC.

The protein localises to the cell inner membrane. In terms of biological role, part of the high-affinity ATP-driven potassium transport (or Kdp) system, which catalyzes the hydrolysis of ATP coupled with the electrogenic transport of potassium into the cytoplasm. This subunit binds the periplasmic potassium ions and delivers the ions to the membrane domain of KdpB through an intramembrane tunnel. The polypeptide is Potassium-transporting ATPase potassium-binding subunit (Shigella boydii serotype 18 (strain CDC 3083-94 / BS512)).